A 155-amino-acid polypeptide reads, in one-letter code: 6,7-dimethyl-8-ribityllumazine synthase (155 aa).

5-amino-6-(D-ribitylamino)uracil is bound by residues F23, 57-59 (AFE), and 81-83 (AVI). 86 to 87 (ST) is a (2S)-2-hydroxy-3-oxobutyl phosphate binding site. H89 acts as the Proton donor in catalysis. F114 serves as a coordination point for 5-amino-6-(D-ribitylamino)uracil. R128 is a binding site for (2S)-2-hydroxy-3-oxobutyl phosphate.

Belongs to the DMRL synthase family.

The enzyme catalyses (2S)-2-hydroxy-3-oxobutyl phosphate + 5-amino-6-(D-ribitylamino)uracil = 6,7-dimethyl-8-(1-D-ribityl)lumazine + phosphate + 2 H2O + H(+). The protein operates within cofactor biosynthesis; riboflavin biosynthesis; riboflavin from 2-hydroxy-3-oxobutyl phosphate and 5-amino-6-(D-ribitylamino)uracil: step 1/2. Its function is as follows. Catalyzes the formation of 6,7-dimethyl-8-ribityllumazine by condensation of 5-amino-6-(D-ribitylamino)uracil with 3,4-dihydroxy-2-butanone 4-phosphate. This is the penultimate step in the biosynthesis of riboflavin. The sequence is that of 6,7-dimethyl-8-ribityllumazine synthase from Dehalococcoides mccartyi (strain ATCC BAA-2100 / JCM 16839 / KCTC 5957 / BAV1).